The following is a 115-amino-acid chain: Large ribosomal subunit protein uL22 (115 aa).

It belongs to the universal ribosomal protein uL22 family. Part of the 50S ribosomal subunit.

Functionally, this protein binds specifically to 23S rRNA; its binding is stimulated by other ribosomal proteins, e.g. L4, L17, and L20. It is important during the early stages of 50S assembly. It makes multiple contacts with different domains of the 23S rRNA in the assembled 50S subunit and ribosome. The globular domain of the protein is located near the polypeptide exit tunnel on the outside of the subunit, while an extended beta-hairpin is found that lines the wall of the exit tunnel in the center of the 70S ribosome. The chain is Large ribosomal subunit protein uL22 from Limosilactobacillus reuteri subsp. reuteri (strain JCM 1112) (Lactobacillus reuteri).